The sequence spans 289 residues: Cbb3-type cytochrome c oxidase subunit FixP (289 aa).

Over 1-33 (MADKHKHVDEVSGVETTGHEWDGIRELNNPMPR) the chain is Cytoplasmic. The chain crosses the membrane as a helical span at residues 34–56 (WWVYSFYATIIWAIGYAIAYPSW). The Periplasmic portion of the chain corresponds to 57-289 (PMLTEATKGM…VFVHSLGGGE (233 aa)). Cytochrome c domains lie at 110 to 198 (FAVS…VSLT) and 205 to 286 (HLVQ…HSLG). Residues Cys-123, Cys-126, His-127, Met-175, Cys-218, Cys-221, His-222, and Met-263 each coordinate heme c.

It belongs to the CcoP / FixP family. As to quaternary structure, component of the cbb3-type cytochrome c oxidase at least composed of FixN, FixO, FixQ and FixP. The cofactor is heme c.

It is found in the cell inner membrane. It participates in energy metabolism; oxidative phosphorylation. Functionally, C-type cytochrome. Part of the cbb3-type cytochrome c oxidase complex. FixP subunit is required for transferring electrons from donor cytochrome c via its heme groups to FixO subunit. From there, electrons are shuttled to the catalytic binuclear center of FixN subunit where oxygen reduction takes place. The complex also functions as a proton pump. The sequence is that of Cbb3-type cytochrome c oxidase subunit FixP from Rhizobium meliloti (strain 1021) (Ensifer meliloti).